We begin with the raw amino-acid sequence, 358 residues long: uncharacterized protein (358 aa).

Residues 1–15 (MITGKTISLPLSVIA) form the signal peptide. The N-palmitoyl cysteine moiety is linked to residue C16. A lipid anchor (S-diacylglycerol cysteine) is attached at C16. The disordered stretch occupies residues 331–358 (PCGTGSPGNPPPNINSVAQHRISTNTNR). Polar residues predominate over residues 347–358 (VAQHRISTNTNR).

The protein localises to the cell membrane. This is an uncharacterized protein from Sinorhizobium fredii (strain NBRC 101917 / NGR234).